Here is a 549-residue protein sequence, read N- to C-terminus: Eukaryotic translation initiation factor 4B2 (549 aa).

Disordered regions lie at residues 1-446 (MSKP…DLIR) and 465-549 (FRPR…REGW). Residues 24–46 (AEATATAADSQSFPSLKEAATAK) are compositionally biased toward low complexity. Composition is skewed to gly residues over residues 96–109 (RLGG…GGRS) and 126–136 (SWGGGGGGRRS). The Nuclear localization signal 1 signature appears at 169–176 (GKKSLPSF). Residues 184-218 (RYGGGGGSFGGGGGGGAGSYGGGGAGAGSGGGGGF) are compositionally biased toward gly residues. The short motif at 234 to 241 (SSTFGSGF) is the Nuclear localization signal 2 element. A compositionally biased stretch (basic and acidic residues) spans 263–278 (QEERRRLVFEPRKADT). Polar residues predominate over residues 281–292 (SETPTAVKTSKP). The segment covering 299–323 (RPREQVLAEKGLDWKKLDSDIEAKK) has biased composition (basic and acidic residues). Residues 327 to 349 (SRPSSAQSSRPSSAQSNRSESSA) show a composition bias toward low complexity. Composition is skewed to basic and acidic residues over residues 369 to 431 (AKPR…KESQ), 485 to 507 (ERPH…ERPR), and 518 to 549 (PVDD…REGW).

Belongs to the eIF-4 subunit B family. Homodimer. Nonspherical monomer. mRNA-discriminating component of initiation complexes. Post-translationally, phosphorylated.

It localises to the nucleus. Promotes the eIF4F and eIF4A RNA-dependent ATP-hydrolysis activity with different efficiency depending on mRNAs, thus providing mRNA discrimination during initiation of translation. The sequence is that of Eukaryotic translation initiation factor 4B2 from Arabidopsis thaliana (Mouse-ear cress).